We begin with the raw amino-acid sequence, 172 residues long: Bifunctional protein PyrR (172 aa).

The PRPP-binding signature appears at 90–102 (LVLVDDVLMSGRT).

It belongs to the purine/pyrimidine phosphoribosyltransferase family. PyrR subfamily.

The catalysed reaction is UMP + diphosphate = 5-phospho-alpha-D-ribose 1-diphosphate + uracil. Regulates the transcription of the pyrimidine nucleotide (pyr) operon in response to exogenous pyrimidines. Functionally, also displays a weak uracil phosphoribosyltransferase activity which is not physiologically significant. This chain is Bifunctional protein PyrR, found in Pseudomonas putida (strain GB-1).